Consider the following 595-residue polypeptide: S-(+)-linalool synthase, chloroplastic (595 aa).

The transit peptide at 1–46 (MVCHVFSSFSSSLIRVLEAPLLLPAASASSSSSSSPASRSGGRRRR) directs the protein to the chloroplast. Positions 27–40 (SASSSSSSSPASRS) are enriched in low complexity. The disordered stretch occupies residues 27–54 (SASSSSSSSPASRSGGRRRRAAHVRPSP). The (2E)-geranyl diphosphate site is built by Arg-309, Asp-346, Asp-350, Arg-487, and Asp-490. Residues Asp-346 and Asp-350 each contribute to the Mg(2+) site. Residues 346-350 (DDIFD) carry the DDXXD motif motif. Mg(2+) is bound by residues Asp-490, Ser-494, and Glu-498.

This sequence belongs to the terpene synthase family. Tpsb subfamily. Mg(2+) serves as cofactor. The cofactor is Mn(2+).

It localises to the plastid. It is found in the chloroplast. The catalysed reaction is (2E)-geranyl diphosphate + H2O = (S)-linalool + diphosphate. It participates in secondary metabolite biosynthesis; terpenoid biosynthesis. Its function is as follows. Involved in monoterpene (C10) biosynthesis. The major product is S-(+)-linalool. Linalool production is induced by jasmonate in response to pathogen attack, it possesses antibacterial activity and is important for resistance to the bacterial blight pathogen Xanthomonas oryzae pv. oryzae (Xoo). Plants over-expressing linalool synthase display enhanced resistance to Xoo. The polypeptide is S-(+)-linalool synthase, chloroplastic (Oryza sativa subsp. japonica (Rice)).